The sequence spans 417 residues: Brevican core protein (417 aa).

A signal peptide spans 1-22; the sequence is MAPLFLPLLIALALAPGPTASA. Positions 23-155 constitute an Ig-like V-type domain; the sequence is DVLEGDSSED…SSDAVEVKVK (133 aa). 3 cysteine pairs are disulfide-bonded: Cys-57–Cys-137, Cys-179–Cys-250, and Cys-203–Cys-224. An N-linked (GlcNAc...) asparagine glycan is attached at Asn-130. Link domains lie at 157-252 and 257-354; these read VVFL…YCYA and GELF…YCFR. N-linked (GlcNAc...) asparagine glycosylation is present at Asn-267. Disulfide bonds link Cys-277/Cys-352 and Cys-301/Cys-322. The N-linked (GlcNAc...) asparagine glycan is linked to Asn-337.

Belongs to the aggrecan/versican proteoglycan family. In terms of tissue distribution, central nervous system.

The protein localises to the secreted. Its subcellular location is the extracellular space. It localises to the extracellular matrix. In terms of biological role, may play a role in the terminally differentiating and the adult nervous system during postnatal development. Could stabilize interactions between hyaluronan (HA) and brain proteoglycans. In Felis catus (Cat), this protein is Brevican core protein (BCAN).